Here is a 99-residue protein sequence, read N- to C-terminus: Large ribosomal subunit protein uL23 (99 aa).

The protein belongs to the universal ribosomal protein uL23 family. In terms of assembly, part of the 50S ribosomal subunit. Contacts protein L29, and trigger factor when it is bound to the ribosome.

In terms of biological role, one of the early assembly proteins it binds 23S rRNA. One of the proteins that surrounds the polypeptide exit tunnel on the outside of the ribosome. Forms the main docking site for trigger factor binding to the ribosome. In Shewanella loihica (strain ATCC BAA-1088 / PV-4), this protein is Large ribosomal subunit protein uL23.